A 282-amino-acid chain; its full sequence is ADP-ribosyl cyclase/cyclic ADP-ribose hydrolase (282 aa).

A signal peptide spans 1-24 (MSPVAIVACVCLAVTLTRISPSEA). Disulfide bonds link C39/C58, C75/C155, C136/C149, C230/C251, and C263/C272.

It belongs to the ADP-ribosyl cyclase family. Ovotestis.

It localises to the cytoplasmic vesicle. It carries out the reaction NAD(+) = cyclic ADP-beta-D-ribose + nicotinamide + H(+). It catalyses the reaction NAD(+) + H2O = ADP-D-ribose + nicotinamide + H(+). The catalysed reaction is nicotinate + NADP(+) = nicotinate-adenine dinucleotide phosphate + nicotinamide. Its activity is regulated as follows. Activity is presumably regulated by its sequestration in vesicles before egg fertilization. After fertilization and upon NADase release, it could then be regulated via its potential phosphorylation sites. Its function is as follows. Synthesizes cyclic ADP-ribose (cADPR), a second messenger for calcium mobilization from endoplasmic reticulum. Might make the Ca(2+) mobilizer nicotinate-adenine dinucleotide phosphate. Does not have cADPR hydrolase activity. This Aplysia kurodai (Kuroda's sea hare) protein is ADP-ribosyl cyclase/cyclic ADP-ribose hydrolase.